Reading from the N-terminus, the 883-residue chain is Phosphoenolpyruvate carboxylase (883 aa).

Residues histidine 138 and lysine 546 contribute to the active site.

It belongs to the PEPCase type 1 family. It depends on Mg(2+) as a cofactor.

The enzyme catalyses oxaloacetate + phosphate = phosphoenolpyruvate + hydrogencarbonate. In terms of biological role, forms oxaloacetate, a four-carbon dicarboxylic acid source for the tricarboxylic acid cycle. This is Phosphoenolpyruvate carboxylase from Erwinia tasmaniensis (strain DSM 17950 / CFBP 7177 / CIP 109463 / NCPPB 4357 / Et1/99).